Consider the following 765-residue polypeptide: MPPTNGEGGSQQPQQQQQQQQQQQQQQQQQQQQQQGGSGSSDFVRKLYKMLEDPSYHSVVRWSDDGDSFVVLENEKFTKTILPKHFKHSNFASFVRQLNKYDFHKVRHNDENGESPYGRDAWEFKHPEFRADRKDNLDNIRRKAPAPRKQQQSEEAFNASQQQIAALSESLQATQQQLQALQQQCYELEKTNRLLVSEVMTLQKMVKAQNQASNEIINHLGSMEDRRRNNRGATQAAPNFHAGAMSFLTDGAEEPAPELRRARELLSVVGPDLQANRELERLYMTYNQNGAPAEPAATNSSAVMFTQAAAPGTQATAPGMPLVHNPLNDPQNMMYPVAQTPSIDPSFHTDQMHNMPYSRPLSNPAVVAETSSSQITPSQITPPPKDQMSSMWRDKKPRVLLVEDDKTCARIGAKFLSTLDCGVDTAGDGLEAVERINQDSTRFDLIFMDIIMPNMDGVSATAMIRMVSPHVPIIAMTSNIRGEDINTYFQYGMNDVLAKPFTRDNMSRLLRRHLAHLLKDPQSAASTGIVLTTDDLTLAGQTAGPATTGVGVGVAGAPSGGAHGPGPPAQHQQGYAMAPPTTMQPAPPQVKFEQSPTAAPAPGLDPSSAAAAPTWQSTNPAGVQLQPPPPPTPTQPSPTSAAPPAGLDPASAVAAAAAAAAAAAAAAASMTPGGYLAAAPPPPPPPGAMVLTPAGTPTGVGHPAPSGAGSAAGARGPPGPGPVGPGSVVDDSRPEKRQRLMQGGYASVSGHGHGHPGVGVAGFVQ.

Positions 1–42 are disordered; the sequence is MPPTNGEGGSQQPQQQQQQQQQQQQQQQQQQQQQQGGSGSSD. Residues 11–35 are compositionally biased toward low complexity; sequence QQPQQQQQQQQQQQQQQQQQQQQQQ. The DNA-binding domain stretch occupies residues 40–145; sequence SSDFVRKLYK…NLDNIRRKAP (106 aa). Residues 157–198 are a coiled coil; sequence FNASQQQIAALSESLQATQQQLQALQQQCYELEKTNRLLVSE. A hydrophobic repeat HR-A/B region spans residues 160–220; the sequence is SQQQIAALSE…QASNEIINHL (61 aa). A disordered region spans residues 371 to 391; that stretch reads SSSQITPSQITPPPKDQMSSM. A Response regulatory domain is found at 398–514; the sequence is RVLLVEDDKT…NMSRLLRRHL (117 aa). Residue D449 is modified to 4-aspartylphosphate. The interval 542–765 is transactivation domain; it reads TAGPATTGVG…PGVGVAGFVQ (224 aa). The span at 550-564 shows a compositional bias: gly residues; it reads VGVGVAGAPSGGAHG. 2 disordered regions span residues 550–647 and 686–765; these read VGVG…PAGL and PGAM…GFVQ. Residues 569–584 show a composition bias toward low complexity; that stretch reads AQHQQGYAMAPPTTMQ. Pro residues predominate over residues 626–636; it reads QPPPPPTPTQP. 2 stretches are compositionally biased toward low complexity: residues 637 to 647 and 699 to 715; these read SPTSAAPPAGL and GVGHPAPSGAGSAAGAR. The segment covering 755 to 765 has biased composition (gly residues); the sequence is HPGVGVAGFVQ.

This sequence belongs to the SKN7 family. As to quaternary structure, homotrimer.

It localises to the nucleus. Functionally, transcription factor that is part of a SLN1-YPD1-SKN7 two-component regulatory system, which controls gene expression in response to changes in the osmolarity of the extracellular environment. Under low osmotic conditions, phosphorylated and activated by the phosphorelay intermediate protein YPD1. Also activated in response to oxidative stress, independent on the two-component regulatory system. Regulates heat shock genes in response to oxidative stress and genes involved in cell wall integrity in response to osmotic changes. The sequence is that of Transcription factor SKN7 from Chaetomium thermophilum (strain DSM 1495 / CBS 144.50 / IMI 039719) (Thermochaetoides thermophila).